The following is a 199-amino-acid chain: Transcription regulator complex subunit bur6 (199 aa).

The tract at residues 106 to 199 is disordered; that stretch reads PPIKAERKTK…SEASSASGDE (94 aa). Residues 112–121 are compositionally biased toward basic residues; sequence RKTKRPRARR. The span at 185–199 shows a compositional bias: polar residues; the sequence is SDKTTSEASSASGDE.

This sequence belongs to the NC2 alpha/DRAP1 family.

It localises to the nucleus. In terms of biological role, transcription regulator complex subunit that is essential for cell cycle progression. The polypeptide is Transcription regulator complex subunit bur6 (Schizosaccharomyces pombe (strain 972 / ATCC 24843) (Fission yeast)).